The chain runs to 104 residues: MRGGMGNMQSMMRQMQKMQKKVTEEQEKLNQTEFTGVAPDDMVKVVFTGDHRMKDIVINPEAIDEDDPDMLQDLIVAAVNDAMNRVDSETNKTMGKYTKGIPGM.

A disordered region spans residues 1–35 (MRGGMGNMQSMMRQMQKMQKKVTEEQEKLNQTEFT). Over residues 8 to 17 (MQSMMRQMQK) the composition is skewed to low complexity. The span at 21 to 30 (KVTEEQEKLN) shows a compositional bias: basic and acidic residues.

This sequence belongs to the YbaB/EbfC family. Homodimer.

The protein localises to the cytoplasm. It localises to the nucleoid. Binds to DNA and alters its conformation. May be involved in regulation of gene expression, nucleoid organization and DNA protection. In Pediococcus pentosaceus (strain ATCC 25745 / CCUG 21536 / LMG 10740 / 183-1w), this protein is Nucleoid-associated protein PEPE_1483.